We begin with the raw amino-acid sequence, 203 residues long: Cupin-domain-containing oxidoreductase fogC (203 aa).

Residues 105-171 (DFAPGVESPL…GNGTLPGRML (67 aa)) are cupin-like domain.

It belongs to the virC family.

The protein operates within secondary metabolite biosynthesis. Cupin-domain-containing oxidoreductase; part of the gene cluster that mediates the biosynthesis of flavoglaucin and congeners (including aspergin, dihydroauroglaucin and auroglaucin), prenylated salicylaldehyde derivatives carrying a saturated or an unsaturated C-7 side chain. The PKS fogA releases the carboxylic acid (8E,10E,12E)-3,5,7-trihydroxytetradeca-8,10,12-trienoic acid as its product, as well as derivatives with one and two double bonds. FogA is indeed able to reduce the initial triketide, thus being at least partially responsible for the differently saturated heptyl side chains of flavoglaucin congeners. The oxidoreductases fogB, fogC and fogD modify the nascent polyketide in fogA-bound form and, together, fogA, fogB, fogC and fogD are necessary for the formation of the aromatic core and the cyclized PKS products are released as salicyl alcohols. In particular, fogB is responsible for oxidation of a hydroxyl group or reduction of remaining double bond(s) at the C-7 residue whereas fogD is probably involved in the reductive release of the modified PKS products. The cytochrome P450 monooxygenase fogE is then responsible for the hydroxylation at C-3 of the benzene ring. The fogE products are substrates of the prenyltransferase fogH and the prenylated benzyl alcohols are subsequently oxidized by the fogF to produce the final aryl aldehydes flavoglaucin and congeners. The short-chain dehydrogenase fogG does not seem to be involved in the biosynthesis of the prenylated salicylaldehyde derivatives. This Aspergillus ruber (strain CBS 135680) protein is Cupin-domain-containing oxidoreductase fogC.